The sequence spans 115 residues: Superoxide reductase (115 aa).

Glu14, His16, His41, His47, Cys102, and His105 together coordinate Fe cation.

Belongs to the desulfoferrodoxin family. Homotetramer. The cofactor is Fe cation.

The catalysed reaction is reduced [rubredoxin] + superoxide + 2 H(+) = oxidized [rubredoxin] + H2O2. In terms of biological role, uses electrons from reduced NADP, by way of rubredoxin and an oxidoreductase, to catalyze the reduction of superoxide to hydrogen peroxide. The polypeptide is Superoxide reductase (sorA) (Thermococcus kodakarensis (strain ATCC BAA-918 / JCM 12380 / KOD1) (Pyrococcus kodakaraensis (strain KOD1))).